The following is a 205-amino-acid chain: MKVLVVYYSMYGHIHRMAEAIVEGAKEVVGAEVVLRRVPETLSHDVLEKMGAVEAQRSMSHIPICTVDELAEADAVIFGSPTRFGNMCGQMRQFLDATGGLWVKGSLIGKVGSVFASSNTQHGGQESTILSFHTTLLHHGMVIVGLPYAFQGQMRNDEITGGSPYGASTVAGTQGERQPTENELAAARYQGKHVASIAYKLVMAR.

Residues 3-194 (VLVVYYSMYG…AAARYQGKHV (192 aa)) form the Flavodoxin-like domain. FMN-binding positions include 9-14 (SMYGHI) and 82-84 (TRF). Tyrosine 11 lines the NAD(+) pocket. Tryptophan 102 is a substrate binding site. Histidine 138 contributes to the FMN binding site.

This sequence belongs to the WrbA family. It depends on FMN as a cofactor.

It catalyses the reaction a quinone + NADH + H(+) = a quinol + NAD(+). The catalysed reaction is a quinone + NADPH + H(+) = a quinol + NADP(+). The polypeptide is NAD(P)H dehydrogenase (quinone) (Geotalea daltonii (strain DSM 22248 / JCM 15807 / FRC-32) (Geobacter daltonii)).